The primary structure comprises 592 residues: Aspartate--tRNA(Asp/Asn) ligase (592 aa).

Position 177 (E177) interacts with L-aspartate. The aspartate stretch occupies residues 201–204 (QLFK). R223 is a binding site for L-aspartate. ATP-binding positions include 223-225 (RDE) and Q232. H451 lines the L-aspartate pocket. Residue E485 coordinates ATP. R492 serves as a coordination point for L-aspartate. Residue 537-540 (GLDR) participates in ATP binding.

The protein belongs to the class-II aminoacyl-tRNA synthetase family. Type 1 subfamily. Homodimer.

It localises to the cytoplasm. It carries out the reaction tRNA(Asx) + L-aspartate + ATP = L-aspartyl-tRNA(Asx) + AMP + diphosphate. In terms of biological role, aspartyl-tRNA synthetase with relaxed tRNA specificity since it is able to aspartylate not only its cognate tRNA(Asp) but also tRNA(Asn). Reaction proceeds in two steps: L-aspartate is first activated by ATP to form Asp-AMP and then transferred to the acceptor end of tRNA(Asp/Asn). This is Aspartate--tRNA(Asp/Asn) ligase from Bacillus subtilis (strain 168).